The sequence spans 942 residues: Protein inturned (942 aa).

2 disordered regions span residues 1 to 56 and 128 to 156; these read MAGL…PEWL and LPRR…KTGV. Acidic residues predominate over residues 22–32; that stretch reads SQEEEEEEGDS. The span at 33–48 shows a compositional bias: low complexity; sequence DAGASSLGSYSSASSD. Residues 137–156 show a composition bias toward polar residues; sequence SSNNGPVSILKHQSSQKTGV. Residues 185–267 form the PDZ domain; that stretch reads LLEVLVGIIH…PMQVKLTFEN (83 aa). A phosphoserine mark is found at serine 674 and serine 678. The tract at residues 707–751 is disordered; that stretch reads KARKPSPSRIGGGREPTEGEESAGLSPHATPDAVRKQRESEGSDD.

This sequence belongs to the inturned family. As to quaternary structure, component of the CPLANE (ciliogenesis and planar polarity effectors) complex, composed of INTU, FUZ and WDPCP. Interacts with CPLANE1. Interacts with NPHP4 and DAAM1; INTU is mediating the interaction between NPHP4 and DAAM1. Widely expressed in E8.5 and E9.5 wild type embryos. Present in various adult organs (at protein level).

The protein localises to the cytoplasm. The protein resides in the cell surface. Its subcellular location is the cytoskeleton. It localises to the cilium basal body. It is found in the microtubule organizing center. The protein localises to the centrosome. The protein resides in the centriole. Its function is as follows. Plays a key role in ciliogenesis and embryonic development. Regulator of cilia formation by controlling the organization of the apical actin cytoskeleton and the positioning of the basal bodies at the apical cell surface, which in turn is essential for the normal orientation of elongating ciliary microtubules. Plays a key role in definition of cell polarity via its role in ciliogenesis but not via conversion extension. Has an indirect effect on hedgehog signaling. Proposed to function as core component of the CPLANE (ciliogenesis and planar polarity effectors) complex involved in the recruitment of peripheral IFT-A proteins to basal bodies. Required for recruitment of CPLANE2 to the mother centriole. Binds phosphatidylinositol 3-phosphate with highest affinity, followed by phosphatidylinositol 4-phosphate and phosphatidylinositol 5-phosphate. In Mus musculus (Mouse), this protein is Protein inturned (Intu).